The sequence spans 249 residues: 3-deoxy-manno-octulosonate cytidylyltransferase (249 aa).

Belongs to the KdsB family.

Its subcellular location is the cytoplasm. It carries out the reaction 3-deoxy-alpha-D-manno-oct-2-ulosonate + CTP = CMP-3-deoxy-beta-D-manno-octulosonate + diphosphate. Its pathway is nucleotide-sugar biosynthesis; CMP-3-deoxy-D-manno-octulosonate biosynthesis; CMP-3-deoxy-D-manno-octulosonate from 3-deoxy-D-manno-octulosonate and CTP: step 1/1. It functions in the pathway bacterial outer membrane biogenesis; lipopolysaccharide biosynthesis. Its function is as follows. Activates KDO (a required 8-carbon sugar) for incorporation into bacterial lipopolysaccharide in Gram-negative bacteria. The polypeptide is 3-deoxy-manno-octulosonate cytidylyltransferase (Oleidesulfovibrio alaskensis (strain ATCC BAA-1058 / DSM 17464 / G20) (Desulfovibrio alaskensis)).